The following is a 446-amino-acid chain: Chromosomal replication initiator protein DnaA (446 aa).

The interval 1–72 (MENILDLWNQ…ADTIYELTGE (72 aa)) is domain I, interacts with DnaA modulators. The domain II stretch occupies residues 72–109 (EELSVKFVIPQNQDEENFLPKPQVKKAAKEEPSDFPQS). The interval 110 to 326 (MLNPKYTFDT…GALIRVVAYS (217 aa)) is domain III, AAA+ region. ATP is bound by residues G154, G156, K157, and T158. The domain IV, binds dsDNA stretch occupies residues 327–446 (SLINKDINAD…QVKEIKELLK (120 aa)).

The protein belongs to the DnaA family. As to quaternary structure, oligomerizes as a right-handed, spiral filament on DNA at oriC.

The protein localises to the cytoplasm. Plays an essential role in the initiation and regulation of chromosomal replication. ATP-DnaA binds to the origin of replication (oriC) to initiate formation of the DNA replication initiation complex once per cell cycle. Binds the DnaA box (a 9 base pair repeat at the origin) and separates the double-stranded (ds)DNA. Forms a right-handed helical filament on oriC DNA; dsDNA binds to the exterior of the filament while single-stranded (ss)DNA is stabiized in the filament's interior. The ATP-DnaA-oriC complex binds and stabilizes one strand of the AT-rich DNA unwinding element (DUE), permitting loading of DNA polymerase. After initiation quickly degrades to an ADP-DnaA complex that is not apt for DNA replication. Binds acidic phospholipids. In Bacillus velezensis (strain DSM 23117 / BGSC 10A6 / LMG 26770 / FZB42) (Bacillus amyloliquefaciens subsp. plantarum), this protein is Chromosomal replication initiator protein DnaA.